Reading from the N-terminus, the 259-residue chain is Protein odd-skipped-related 1 (259 aa).

3 consecutive C2H2-type zinc fingers follow at residues 168 to 190 (FVCK…ERTH), 196 to 218 (YTCD…RYIH), and 224 to 246 (FKCQ…KTLH).

Belongs to the Odd C2H2-type zinc-finger protein family. As to expression, at early gastrula stage, expressed in the involuting mesoderm and endoderm. During neurulation, expressed in the pronephric primordium, following expression of osr2. During tailbud (stage 35), expressed in the rectal diverticulum and in the kidney ducts.

Its subcellular location is the nucleus. Its function is as follows. Transcriptional repressor. Required for pronephric kidney development. This chain is Protein odd-skipped-related 1, found in Xenopus laevis (African clawed frog).